The sequence spans 116 residues: S-adenosylmethionine decarboxylase proenzyme (116 aa).

Ser-63 acts as the Schiff-base intermediate with substrate; via pyruvic acid in catalysis. Ser-63 bears the Pyruvic acid (Ser); by autocatalysis mark. The active-site Proton acceptor; for processing activity is His-68. Cys-83 (proton donor; for catalytic activity) is an active-site residue.

The protein belongs to the prokaryotic AdoMetDC family. Type 1 subfamily. Heterotetramer of two alpha and two beta chains arranged as a dimer of alpha/beta heterodimers. The cofactor is pyruvate. Post-translationally, is synthesized initially as an inactive proenzyme. Formation of the active enzyme involves a self-maturation process in which the active site pyruvoyl group is generated from an internal serine residue via an autocatalytic post-translational modification. Two non-identical subunits are generated from the proenzyme in this reaction, and the pyruvate is formed at the N-terminus of the alpha chain, which is derived from the carboxyl end of the proenzyme. The post-translation cleavage follows an unusual pathway, termed non-hydrolytic serinolysis, in which the side chain hydroxyl group of the serine supplies its oxygen atom to form the C-terminus of the beta chain, while the remainder of the serine residue undergoes an oxidative deamination to produce ammonia and the pyruvoyl group blocking the N-terminus of the alpha chain.

It carries out the reaction S-adenosyl-L-methionine + H(+) = S-adenosyl 3-(methylsulfanyl)propylamine + CO2. It functions in the pathway amine and polyamine biosynthesis; S-adenosylmethioninamine biosynthesis; S-adenosylmethioninamine from S-adenosyl-L-methionine: step 1/1. Catalyzes the decarboxylation of S-adenosylmethionine to S-adenosylmethioninamine (dcAdoMet), the propylamine donor required for the synthesis of the polyamines spermine and spermidine from the diamine putrescine. The polypeptide is S-adenosylmethionine decarboxylase proenzyme (Clostridium botulinum (strain 657 / Type Ba4)).